Consider the following 273-residue polypeptide: NAD-dependent protein deacetylase 2 (273 aa).

Residues Met1–Leu273 enclose the Deacetylase sirtuin-type domain. Residues Gly26–Lys46 and Gln104–Asp107 contribute to the NAD(+) site. The Proton acceptor role is filled by His122. Residues Cys130, Cys133, Cys181, and Cys184 each contribute to the Zn(2+) site. NAD(+) is bound by residues Gly221–Ser223, Asn247–Gly249, and Cys265.

The protein belongs to the sirtuin family. Class II subfamily. The cofactor is Zn(2+).

The protein localises to the cytoplasm. It catalyses the reaction N(6)-acetyl-L-lysyl-[protein] + NAD(+) + H2O = 2''-O-acetyl-ADP-D-ribose + nicotinamide + L-lysyl-[protein]. In terms of biological role, NAD-dependent protein deacetylase which modulates the activities of several enzymes which are inactive in their acetylated form. This chain is NAD-dependent protein deacetylase 2, found in Bradyrhizobium diazoefficiens (strain JCM 10833 / BCRC 13528 / IAM 13628 / NBRC 14792 / USDA 110).